The primary structure comprises 133 residues: Small ribosomal subunit protein uS8c (133 aa).

This sequence belongs to the universal ribosomal protein uS8 family. As to quaternary structure, part of the 30S ribosomal subunit.

Its subcellular location is the plastid. The protein localises to the chloroplast. Its function is as follows. One of the primary rRNA binding proteins, it binds directly to 16S rRNA central domain where it helps coordinate assembly of the platform of the 30S subunit. This chain is Small ribosomal subunit protein uS8c (rps8), found in Chlorokybus atmophyticus (Soil alga).